A 934-amino-acid chain; its full sequence is Serine/threonine-protein kinase atg1 (934 aa).

Residues Tyr22 to Thr328 form the Protein kinase domain. Residues Ile28–Val36 and Lys51 contribute to the ATP site. Asp165 functions as the Proton acceptor in the catalytic mechanism. 6 disordered regions span residues Ile335–Pro432, Arg462–Glu481, Arg531–Ser580, Thr684–Thr703, Arg800–Ala822, and Glu878–Gly900. Over residues Pro340 to Pro368 the composition is skewed to polar residues. Residues Met371–Gln386 are compositionally biased toward basic and acidic residues. The segment covering Ser538–Thr550 has biased composition (low complexity). The span at Ala561–Tyr577 shows a compositional bias: basic and acidic residues.

Belongs to the protein kinase superfamily. Ser/Thr protein kinase family. APG1/unc-51/ULK1 subfamily. In terms of assembly, homodimer. Forms a ternary complex with ATG13 and ATG17.

Its subcellular location is the cytoplasm. It is found in the preautophagosomal structure membrane. The enzyme catalyses L-seryl-[protein] + ATP = O-phospho-L-seryl-[protein] + ADP + H(+). It carries out the reaction L-threonyl-[protein] + ATP = O-phospho-L-threonyl-[protein] + ADP + H(+). Serine/threonine protein kinase involved in the cytoplasm to vacuole transport (Cvt) and found to be essential in autophagy, where it is required for the formation of autophagosomes. Involved in the clearance of protein aggregates which cannot be efficiently cleared by the proteasome. Required for selective autophagic degradation of the nucleus (nucleophagy) as well as for mitophagy which contributes to regulate mitochondrial quantity and quality by eliminating the mitochondria to a basal level to fulfill cellular energy requirements and preventing excess ROS production. Also involved in endoplasmic reticulum-specific autophagic process, in selective removal of ER-associated degradation (ERAD) substrates. Plays a key role in ATG9 and ATG23 cycling through the pre-autophagosomal structure and is necessary to promote ATG18 binding to ATG9 through phosphorylation of ATG9. Catalyzes phosphorylation of ATG4, decreasing the interaction between ATG4 and ATG8 and impairing deconjugation of PE-conjugated forms of ATG8. Required for conidiation and development of aerial hyphae. The chain is Serine/threonine-protein kinase atg1 from Aspergillus oryzae (strain ATCC 42149 / RIB 40) (Yellow koji mold).